Reading from the N-terminus, the 238-residue chain is tRNA (guanine-N(1)-)-methyltransferase (238 aa).

Residues glycine 112 and 131–136 (LGDFIL) contribute to the S-adenosyl-L-methionine site.

Belongs to the RNA methyltransferase TrmD family. Homodimer.

Its subcellular location is the cytoplasm. The enzyme catalyses guanosine(37) in tRNA + S-adenosyl-L-methionine = N(1)-methylguanosine(37) in tRNA + S-adenosyl-L-homocysteine + H(+). Specifically methylates guanosine-37 in various tRNAs. In Nostoc punctiforme (strain ATCC 29133 / PCC 73102), this protein is tRNA (guanine-N(1)-)-methyltransferase.